The following is a 423-amino-acid chain: Salicylate 5-hydroxylase, large oxygenase component (423 aa).

The disordered stretch occupies residues 1–20 (MSEPQRLKPVFPQDPKWPGE). The Rieske domain maps to 49 to 168 (WCYVGLEAEI…VAARGGAVFA (120 aa)). 4 residues coordinate [2Fe-2S] cluster: Cys91, His93, Cys111, and His114. Fe cation contacts are provided by His224, His229, and Asp370.

Belongs to the bacterial ring-hydroxylating dioxygenase alpha subunit family. In terms of assembly, the salicylate 5-hydroxylase (S5H) multicomponent enzyme system is composed of an electron transfer component and an oxygenase component. The electron transfer component is comprised of a ferredoxin reductase (NagAa) and a ferredoxin (NagAb), and the oxygenase component is formed by a large subunit (NagG) and a small subunit (NagH). Requires Fe cation as cofactor. [2Fe-2S] cluster serves as cofactor.

It carries out the reaction salicylate + NADH + O2 + H(+) = 2,5-dihydroxybenzoate + NAD(+) + H2O. It participates in aromatic compound metabolism; naphthalene degradation. Functionally, oxygenase component of the salicylate 5-hydroxylase (S5H) multicomponent enzyme system which catalyzes the 5-hydroxylation of salicylate to gentisate. Active only on substrates with a ring-substituted carboxylate group with an adjacent hydroxyl group. Primarily active against salicylate and substituted salicylates, but not against 2-hydroxycinnamate, 3-hydroxycinnamate, 2-hydroxyphenylacetate, 3-hydroxyphenylacetate, 2-hydroxybenzophenone, 1-hydroxy-2-naphthoate, 4-methoxysalicylate or 2-hydroxyacetophenone. This chain is Salicylate 5-hydroxylase, large oxygenase component, found in Ralstonia sp.